Here is a 178-residue protein sequence, read N- to C-terminus: V-type proton ATPase subunit c''2 (178 aa).

Over 1–24 (MSGVAIHASSWGAALVRISPYTFS) the chain is Lumenal. Residues 25–45 (AIGIAISIGVSVLGAAWGIYI) form a helical membrane-spanning segment. The Cytoplasmic segment spans residues 46-64 (TGSSLIGAAIEAPRITSKN). A helical transmembrane segment spans residues 65–85 (LISVIFCEAVAIYGVIVAIIL). The Lumenal segment spans residues 86 to 108 (QTKLESVPSSKMYDAESLRAGYA). Residues 109 to 129 (IFASGIIVGFANLVCGLCVGI) form a helical membrane-spanning segment. Topologically, residues 130–147 (IGSSCALSDAQNSTLFVK) are cytoplasmic. The chain crosses the membrane as a helical span at residues 148-168 (ILVIEIFGSALGLFGVIVGII). Residues 169–178 (MSAQATWPTK) are Lumenal-facing.

This sequence belongs to the V-ATPase proteolipid subunit family. In terms of assembly, V-ATPase is a heteromultimeric enzyme composed of a peripheral catalytic V1 complex (components A to H) attached to an integral membrane V0 proton pore complex (components: a, c, c'', d and e). The proteolipid components c and c'' are present as a hexameric ring that forms the proton-conducting pore. Interacts with APD2.

The protein resides in the endoplasmic reticulum membrane. It is found in the golgi apparatus membrane. Its function is as follows. Proton-conducting pore forming subunit of the membrane integral V0 complex of vacuolar ATPase. V-ATPase is responsible for acidifying a variety of intracellular compartments in eukaryotic cells. This chain is V-type proton ATPase subunit c''2 (VHA-c''2), found in Arabidopsis thaliana (Mouse-ear cress).